A 335-amino-acid polypeptide reads, in one-letter code: 2-acylglycerol O-acyltransferase 2-B (335 aa).

2 helical membrane passes run 24-44 (WAVS…LLLF) and 104-124 (YIMG…NFCT). N-linked (GlcNAc...) asparagine glycosylation is present at Asn-206.

The protein belongs to the diacylglycerol acyltransferase family.

It localises to the endoplasmic reticulum membrane. Its subcellular location is the cytoplasm. The protein resides in the perinuclear region. The enzyme catalyses a 2-acylglycerol + an acyl-CoA = a 1,2-diacylglycerol + CoA. The catalysed reaction is a 2-acylglycerol + an acyl-CoA = a 1,2-diacyl-sn-glycerol + CoA. It catalyses the reaction a 2-acylglycerol + an acyl-CoA = a 2,3-diacyl-sn-glycerol + CoA. It carries out the reaction a 1-acylglycerol + an acyl-CoA = a 1,2-diacylglycerol + CoA. The enzyme catalyses a 1-acylglycerol + an acyl-CoA = a 1,3-diacylglycerol + CoA. The catalysed reaction is 1-O-alkylglycerol + an acyl-CoA = 1-O-alkyl-3-acylglycerol + CoA. It catalyses the reaction an acyl-CoA + a 1,2-diacyl-sn-glycerol = a triacyl-sn-glycerol + CoA. Its pathway is glycerolipid metabolism; triacylglycerol biosynthesis. Catalyzes the formation of diacylglycerol from 2-monoacylglycerol and fatty acyl-CoA. Functionally, involved in glycerolipid synthesis and lipid metabolism. Catalyzes the formation of diacylglycerol, the precursor of triacylglycerol, by transferring the acyl chain of a fatty acyl-CoA to a monoacylglycerol. Plays a central role in absorption of dietary fat in the small intestine by catalyzing the resynthesis of triacylglycerol in enterocytes. Has a preference toward monoacylglycerols containing unsaturated fatty acids in an order of C18:3 &gt; C18:2 &gt; C18:1 &gt; C18:0 at sn-2. Able to use 1-monoalkylglycerol (1-MAkG, 1-O-alkylglycerol) as an acyl acceptor for the synthesis of monoalkyl-monoacylglycerol (MAMAG, 1-O-alkyl-3-acylglycerol or 1-O-alkyl-2-acylglycerol) and subsequently, with lower efficiency, may add another acyl chain producing monoalkyl-diacylglycerol (MADAG, 1-O-alkyl-2,3-diacylglycerol). Possesses weak but significant activity with diacylglycerol as substrate, producing triacylglycerol (triacyl-sn-glycerol). The sequence is that of 2-acylglycerol O-acyltransferase 2-B (mogat2-b) from Xenopus laevis (African clawed frog).